The chain runs to 42 residues: Bacteriocin bavaricin-MN (42 aa).

A disulfide bond links cysteine 10 and cysteine 15.

It belongs to the bacteriocin class IIA/YGNGV family.

The protein resides in the secreted. In terms of biological role, has antimicrobial activity. This is Bacteriocin bavaricin-MN from Latilactobacillus sakei (Lactobacillus sakei).